We begin with the raw amino-acid sequence, 227 residues long: Enolase-phosphatase E1 (227 aa).

This sequence belongs to the HAD-like hydrolase superfamily. MasA/MtnC family. As to quaternary structure, monomer. Requires Mg(2+) as cofactor.

The enzyme catalyses 5-methylsulfanyl-2,3-dioxopentyl phosphate + H2O = 1,2-dihydroxy-5-(methylsulfanyl)pent-1-en-3-one + phosphate. Its pathway is amino-acid biosynthesis; L-methionine biosynthesis via salvage pathway; L-methionine from S-methyl-5-thio-alpha-D-ribose 1-phosphate: step 3/6. It functions in the pathway amino-acid biosynthesis; L-methionine biosynthesis via salvage pathway; L-methionine from S-methyl-5-thio-alpha-D-ribose 1-phosphate: step 4/6. Functionally, bifunctional enzyme that catalyzes the enolization of 2,3-diketo-5-methylthiopentyl-1-phosphate (DK-MTP-1-P) into the intermediate 2-hydroxy-3-keto-5-methylthiopentenyl-1-phosphate (HK-MTPenyl-1-P), which is then dephosphorylated to form the acireductone 1,2-dihydroxy-3-keto-5-methylthiopentene (DHK-MTPene). The polypeptide is Enolase-phosphatase E1 (Gluconobacter oxydans (strain 621H) (Gluconobacter suboxydans)).